Here is a 305-residue protein sequence, read N- to C-terminus: Putative lipid kinase SAS0691 (305 aa).

The 137-residue stretch at 3–139 folds into the DAGKc domain; sequence NKYTHGVLFY…YDVIKINNQY (137 aa). ATP contacts are provided by residues serine 44, 74–80, and threonine 101; that span reads GDGTVNE. 3 residues coordinate Mg(2+): serine 220, aspartate 223, and glutamate 225. Residue glutamate 281 is the Proton acceptor of the active site.

The protein belongs to the diacylglycerol/lipid kinase family. Mg(2+) is required as a cofactor.

Functionally, may catalyze the ATP-dependent phosphorylation of lipids other than diacylglycerol (DAG). This Staphylococcus aureus (strain MSSA476) protein is Putative lipid kinase SAS0691.